The sequence spans 169 residues: Small ribosomal subunit protein uS13c (169 aa).

Residues 1 to 47 (MAQMVAMPVAHSLSLICNWAKSNPLSRNTLALPASNTPNKQSLSIRC) constitute a chloroplast transit peptide.

This sequence belongs to the universal ribosomal protein uS13 family. In terms of assembly, part of the 30S ribosomal subunit.

The protein localises to the plastid. It is found in the chloroplast. Functionally, located at the top of the head of the 30S subunit, it contacts several helices of the 16S rRNA. The protein is Small ribosomal subunit protein uS13c (RPS13) of Arabidopsis thaliana (Mouse-ear cress).